A 295-amino-acid polypeptide reads, in one-letter code: NAD kinase (295 aa).

Asp-74 (proton acceptor) is an active-site residue. NAD(+) is bound by residues Asp-74–Gly-75, Asn-148–Asp-149, His-159, Arg-176, Asp-178, and Thr-189–Ser-194.

This sequence belongs to the NAD kinase family. The cofactor is a divalent metal cation.

Its subcellular location is the cytoplasm. It carries out the reaction NAD(+) + ATP = ADP + NADP(+) + H(+). Functionally, involved in the regulation of the intracellular balance of NAD and NADP, and is a key enzyme in the biosynthesis of NADP. Catalyzes specifically the phosphorylation on 2'-hydroxyl of the adenosine moiety of NAD to yield NADP. This is NAD kinase from Legionella pneumophila (strain Paris).